The chain runs to 511 residues: Lysine--tRNA ligase (511 aa).

Positions 1-21 are disordered; that stretch reads MHTEKDPNKNTPEQQTPISLN. Positions 9–21 are enriched in polar residues; it reads KNTPEQQTPISLN. 2 residues coordinate Mg(2+): Glu-422 and Glu-429.

The protein belongs to the class-II aminoacyl-tRNA synthetase family. In terms of assembly, homodimer. Mg(2+) is required as a cofactor.

The protein resides in the cytoplasm. It carries out the reaction tRNA(Lys) + L-lysine + ATP = L-lysyl-tRNA(Lys) + AMP + diphosphate. This chain is Lysine--tRNA ligase, found in Pelodictyon phaeoclathratiforme (strain DSM 5477 / BU-1).